Here is a 220-residue protein sequence, read N- to C-terminus: Glutathione S-transferase U26 (220 aa).

Residues 4-83 (DQVILLDYWP…YIDEVWSDAS (80 aa)) enclose the GST N-terminal domain. Glutathione-binding positions include 14–15 (SM), 40–41 (VK), 54–55 (KI), and 67–68 (ES). The 122-residue stretch at 89 to 210 (DPYQKSRARF…ADSDRIIEYV (122 aa)) folds into the GST C-terminal domain.

Belongs to the GST superfamily. Tau family.

It is found in the cytoplasm. The protein resides in the cytosol. It catalyses the reaction RX + glutathione = an S-substituted glutathione + a halide anion + H(+). In terms of biological role, in vitro, possesses glutathione S-transferase activity toward 1-chloro-2,4-dinitrobenzene (CDNB). May be involved in the conjugation of reduced glutathione to a wide number of exogenous and endogenous hydrophobic electrophiles and have a detoxification role against certain herbicides. The sequence is that of Glutathione S-transferase U26 (GSTU26) from Arabidopsis thaliana (Mouse-ear cress).